We begin with the raw amino-acid sequence, 306 residues long: Myb family transcription factor MOF1 (306 aa).

An HTH myb-type domain is found at 19-79 (RSKVPRLRWT…HLQMYRCSRL (61 aa)). A DNA-binding region (H-T-H motif) is located at residues 50-75 (PKLILQLMGVKGLTISHVKSHLQMYR).

As to quaternary structure, interacts with TPR1, TPR2 and TPR3. Expressed in roots, leaves, leaf sheaths, culms, panicles, lemmas, paleas, lodicules, stamens, and pistils.

Its subcellular location is the nucleus. Its function is as follows. Transcriptional repressor that plays a role in the regulation of organ identity and spikelet meristem determinacy. Interacts with the TPR corepressors to possibly repress the expression of downstream target genes. The sequence is that of Myb family transcription factor MOF1 from Oryza sativa subsp. japonica (Rice).